We begin with the raw amino-acid sequence, 273 residues long: Structural protein ORF273 (273 aa).

Its subcellular location is the virion. This Acidianus convivator (ATV) protein is Structural protein ORF273.